Consider the following 470-residue polypeptide: MIDKEVIVIGAGLAGSEAAWQIANAGVPVKLVEMRPYKSTPAHHTGEFGELVCSNSFGAISADRAAGLLQKELRIFNSLIVQTADKFAVPAGGALAVDRSKFSNALTETLSNHPLINIKRIEQLDLPSKENITILATGPLTSDDLAYKIQDFTGIDDCHFFDAASPIIYGDSIDHEIVFKASRYDKGDPAYLNCPMDKYEYTNFRNQLIEGEQANLKDFEKESANFFEACLPIEEIARRGIDTMRYGPLKSIGLWNPKWGDLFDRDNRLKKRPHAIVQLRKEDLEGKLLNMVGFQTNLKWSEQKRIFRIIPGLEKAEFVRFGVMHRNTFLESPKLLLPTLQFMKRESLFAAGQITGTEGYAAAAAGGLLAGINASLIAKGEIAVTFPDESMIGSLMNFISNRNKIMSSQKKNKFQPIPASFGLVPELTKRIKDKRSRYIAYQQRSVDVLNIFKRKLDYIFNKDHTLVKIN.

10-15 (GAGLAG) is an FAD binding site.

Belongs to the MnmG family. TrmFO subfamily. FAD is required as a cofactor.

The protein resides in the cytoplasm. It catalyses the reaction uridine(54) in tRNA + (6R)-5,10-methylene-5,6,7,8-tetrahydrofolate + NADH + H(+) = 5-methyluridine(54) in tRNA + (6S)-5,6,7,8-tetrahydrofolate + NAD(+). It carries out the reaction uridine(54) in tRNA + (6R)-5,10-methylene-5,6,7,8-tetrahydrofolate + NADPH + H(+) = 5-methyluridine(54) in tRNA + (6S)-5,6,7,8-tetrahydrofolate + NADP(+). Catalyzes the folate-dependent formation of 5-methyl-uridine at position 54 (M-5-U54) in all tRNAs. The chain is Methylenetetrahydrofolate--tRNA-(uracil-5-)-methyltransferase TrmFO from Prochlorococcus marinus (strain MIT 9312).